A 321-amino-acid chain; its full sequence is AA9 family lytic polysaccharide monooxygenase A (321 aa).

Residues 1–21 (MFRAQSFLPVLALVLRVAAHG) form the signal peptide. A Cu(2+)-binding site is contributed by His-20. Cys-71 and Cys-197 are disulfide-bonded. Asn-72 is a glycosylation site (N-linked (GlcNAc...) asparagine). His-105 serves as a coordination point for Cu(2+). Residue Asn-157 is glycosylated (N-linked (GlcNAc...) asparagine). His-183 and Gln-192 together coordinate O2. Residue Tyr-194 participates in Cu(2+) binding. Residues 278–306 (SSSAAATQSSSAAPSSSAIGTSTASSAAA) form a disordered region. Ser-293 carries the GPI-anchor amidated serine lipid modification. A propeptide spans 294-321 (SAIGTSTASSAAASGTAIVDANTCMNSA) (removed in mature form).

Belongs to the polysaccharide monooxygenase AA9 family. The cofactor is Cu(2+).

It is found in the cell membrane. It catalyses the reaction [(1-&gt;4)-beta-D-glucosyl]n+m + reduced acceptor + O2 = 4-dehydro-beta-D-glucosyl-[(1-&gt;4)-beta-D-glucosyl]n-1 + [(1-&gt;4)-beta-D-glucosyl]m + acceptor + H2O.. Functionally, lytic polysaccharide monooxygenase (LPMO) that depolymerizes crystalline and amorphous polysaccharides via the oxidation of scissile alpha- or beta-(1-4)-glycosidic bonds, yielding C1 or C4 oxidation products. Catalysis by LPMOs requires the reduction of the active-site copper from Cu(II) to Cu(I) by a reducing agent and H(2)O(2) or O(2) as a cosubstrate. Has broad specificity, cleaving at any position along the beta-glucan backbone of xyloglucan, regardless of substitutions. Shows minor activity on glucomannan. The protein is AA9 family lytic polysaccharide monooxygenase A of Gloeophyllum trabeum (strain ATCC 11539 / FP-39264 / Madison 617) (Brown rot fungus).